The following is a 164-amino-acid chain: Cyclic pyranopterin monophosphate synthase (164 aa).

Substrate contacts are provided by residues 75–77 (MCH) and 116–117 (ME). Residue D131 is part of the active site.

Belongs to the MoaC family. In terms of assembly, homohexamer; trimer of dimers.

It catalyses the reaction (8S)-3',8-cyclo-7,8-dihydroguanosine 5'-triphosphate = cyclic pyranopterin phosphate + diphosphate. It participates in cofactor biosynthesis; molybdopterin biosynthesis. In terms of biological role, catalyzes the conversion of (8S)-3',8-cyclo-7,8-dihydroguanosine 5'-triphosphate to cyclic pyranopterin monophosphate (cPMP). In Staphylococcus aureus (strain MSSA476), this protein is Cyclic pyranopterin monophosphate synthase.